The following is a 243-amino-acid chain: Type III pantothenate kinase (243 aa).

7–14 lines the ATP pocket; sequence DLGNSRFK. Substrate-binding positions include Tyr-91 and 98 to 101; that span reads GVDR. The active-site Proton acceptor is Asp-100. Position 122 (Thr-122) interacts with ATP. Thr-172 is a binding site for substrate.

This sequence belongs to the type III pantothenate kinase family. As to quaternary structure, homodimer. NH4(+) serves as cofactor. It depends on K(+) as a cofactor.

It localises to the cytoplasm. It catalyses the reaction (R)-pantothenate + ATP = (R)-4'-phosphopantothenate + ADP + H(+). Its pathway is cofactor biosynthesis; coenzyme A biosynthesis; CoA from (R)-pantothenate: step 1/5. In terms of biological role, catalyzes the phosphorylation of pantothenate (Pan), the first step in CoA biosynthesis. The chain is Type III pantothenate kinase from Stenotrophomonas maltophilia (strain R551-3).